The sequence spans 239 residues: Norbelladine 4'-O-methyltransferase 2 (239 aa).

S-adenosyl-L-methionine contacts are provided by residues valine 55, glutamate 77, glycine 79–valine 80, serine 85, aspartate 103, and alanine 132. Aspartate 155 lines the a divalent metal cation pocket. Residue aspartate 157 coordinates S-adenosyl-L-methionine. Residues aspartate 181 and asparagine 182 each coordinate a divalent metal cation.

The protein belongs to the class I-like SAM-binding methyltransferase superfamily. Cation-dependent O-methyltransferase family. Mg(2+) is required as a cofactor.

The catalysed reaction is norbelladine + S-adenosyl-L-methionine = 4'-O-methylnorbelladine + S-adenosyl-L-homocysteine + H(+). It functions in the pathway alkaloid biosynthesis. In terms of biological role, 4'-O-methyltransferase converting norbelladine to 4'-O-methylnorbelladine. 4'-O-methylnorbelladine is a precursor to all Amaryllidaceae alkaloids such as galanthamine, lycorine and haemanthamine, and including haemanthamine- and crinamine-type alkaloids, promising anticancer agents. This chain is Norbelladine 4'-O-methyltransferase 2, found in Narcissus aff. pseudonarcissus MK-2014 (Daffodil).